The primary structure comprises 153 residues: Interleukin-2 (153 aa).

The signal sequence occupies residues 1-20 (MYRMQLLSCIALSLALVTNS). T23 carries an O-linked (GalNAc...) threonine glycan. A disulfide bridge links C78 with C125.

The protein belongs to the IL-2 family.

Its subcellular location is the secreted. Functionally, cytokine produced by activated CD4-positive helper T-cells and to a lesser extend activated CD8-positive T-cells and natural killer (NK) cells that plays pivotal roles in the immune response and tolerance. Binds to a receptor complex composed of either the high-affinity trimeric IL-2R (IL2RA/CD25, IL2RB/CD122 and IL2RG/CD132) or the low-affinity dimeric IL-2R (IL2RB and IL2RG). Interaction with the receptor leads to oligomerization and conformation changes in the IL-2R subunits resulting in downstream signaling starting with phosphorylation of JAK1 and JAK3. In turn, JAK1 and JAK3 phosphorylate the receptor to form a docking site leading to the phosphorylation of several substrates including STAT5. This process leads to activation of several pathways including STAT, phosphoinositide-3-kinase/PI3K and mitogen-activated protein kinase/MAPK pathways. Functions as a T-cell growth factor and can increase NK-cell cytolytic activity as well. Promotes strong proliferation of activated B-cells and subsequently immunoglobulin production. Plays a pivotal role in regulating the adaptive immune system by controlling the survival and proliferation of regulatory T-cells, which are required for the maintenance of immune tolerance. Moreover, participates in the differentiation and homeostasis of effector T-cell subsets, including Th1, Th2, Th17 as well as memory CD8-positive T-cells. This Homo sapiens (Human) protein is Interleukin-2 (IL2).